A 75-amino-acid chain; its full sequence is U-stichotoxin-Hau3a (75 aa).

The first 19 residues, methionine 1 to alanine 19, serve as a signal peptide directing secretion. The propeptide occupies glutamate 20 to arginine 26. 3 disulfide bridges follow: cysteine 31–cysteine 71, cysteine 33–cysteine 61, and cysteine 54–cysteine 72.

Belongs to the sea anemone sodium channel inhibitory toxin family. Type I subfamily. Contains 3 disulfide bonds.

Its subcellular location is the secreted. The protein resides in the nematocyst. Toxin that is lethal to crab. The sequence is that of U-stichotoxin-Hau3a from Heteractis aurora (Banded sea anemone).